A 182-amino-acid polypeptide reads, in one-letter code: MADCDSVTNSPLATATATLHTNRGDIKIALFGNHAPKTVANFVGLAQGTKDYSTQNASGGPSGPFYDGAVFHRVIQGFMIQGGDPTGTGRGGPGYKFADEFHPELQFDKPYLLAMANAGPGTNGSQFFITVGKTPHLNRRHTIFGEVIDAESQRVVEAISKTATDGNDRPTDPVVIESITIS.

Residues 13-181 (ATATATLHTN…DPVVIESITI (169 aa)) enclose the PPIase cyclophilin-type domain.

Belongs to the cyclophilin-type PPIase family.

Its subcellular location is the cytoplasm. It catalyses the reaction [protein]-peptidylproline (omega=180) = [protein]-peptidylproline (omega=0). PPIases accelerate the folding of proteins. It catalyzes the cis-trans isomerization of proline imidic peptide bonds in oligopeptides. The sequence is that of Probable peptidyl-prolyl cis-trans isomerase A (ppiA) from Mycobacterium bovis (strain ATCC BAA-935 / AF2122/97).